The sequence spans 552 residues: Esterase E4 (552 aa).

An N-terminal signal peptide occupies residues 1–23 (MKNTCGILLNLFLFIGCFLTCSA). Asn81 carries N-linked (GlcNAc...) asparagine glycosylation. Cys89 and Cys106 are joined by a disulfide. Ser214 acts as the Acyl-ester intermediate in catalysis. A disulfide bridge connects residues Cys266 and Cys277. A glycan (N-linked (GlcNAc...) asparagine) is linked at Asn269. Glu339 functions as the Charge relay system in the catalytic mechanism. Residues Asn371, Asn404, and Asn443 are each glycosylated (N-linked (GlcNAc...) asparagine). His463 serves as the catalytic Charge relay system.

Belongs to the type-B carboxylesterase/lipase family.

It carries out the reaction a carboxylic ester + H2O = an alcohol + a carboxylate + H(+). Overproduction of nonspecific esterases is a common mechanism of resistance to organophosphate insecticides. This is Esterase E4 from Myzus persicae (Green peach aphid).